The following is a 336-amino-acid chain: 4-hydroxy-3-methylbut-2-enyl diphosphate reductase (336 aa).

Cys37 contacts [4Fe-4S] cluster. 2 residues coordinate (2E)-4-hydroxy-3-methylbut-2-enyl diphosphate: His66 and His99. His66 and His99 together coordinate dimethylallyl diphosphate. His66 and His99 together coordinate isopentenyl diphosphate. Cys121 contacts [4Fe-4S] cluster. Residue His149 coordinates (2E)-4-hydroxy-3-methylbut-2-enyl diphosphate. Position 149 (His149) interacts with dimethylallyl diphosphate. His149 contacts isopentenyl diphosphate. The active-site Proton donor is the Glu151. Thr189 contributes to the (2E)-4-hydroxy-3-methylbut-2-enyl diphosphate binding site. A [4Fe-4S] cluster-binding site is contributed by Cys219. Residues Ser247, Ser248, Asn249, and Ser292 each contribute to the (2E)-4-hydroxy-3-methylbut-2-enyl diphosphate site. Residues Ser247, Ser248, Asn249, and Ser292 each coordinate dimethylallyl diphosphate. Positions 247, 248, 249, and 292 each coordinate isopentenyl diphosphate.

This sequence belongs to the IspH family. The cofactor is [4Fe-4S] cluster.

It catalyses the reaction isopentenyl diphosphate + 2 oxidized [2Fe-2S]-[ferredoxin] + H2O = (2E)-4-hydroxy-3-methylbut-2-enyl diphosphate + 2 reduced [2Fe-2S]-[ferredoxin] + 2 H(+). The catalysed reaction is dimethylallyl diphosphate + 2 oxidized [2Fe-2S]-[ferredoxin] + H2O = (2E)-4-hydroxy-3-methylbut-2-enyl diphosphate + 2 reduced [2Fe-2S]-[ferredoxin] + 2 H(+). Its pathway is isoprenoid biosynthesis; dimethylallyl diphosphate biosynthesis; dimethylallyl diphosphate from (2E)-4-hydroxy-3-methylbutenyl diphosphate: step 1/1. It participates in isoprenoid biosynthesis; isopentenyl diphosphate biosynthesis via DXP pathway; isopentenyl diphosphate from 1-deoxy-D-xylulose 5-phosphate: step 6/6. In terms of biological role, catalyzes the conversion of 1-hydroxy-2-methyl-2-(E)-butenyl 4-diphosphate (HMBPP) into a mixture of isopentenyl diphosphate (IPP) and dimethylallyl diphosphate (DMAPP). Acts in the terminal step of the DOXP/MEP pathway for isoprenoid precursor biosynthesis. This chain is 4-hydroxy-3-methylbut-2-enyl diphosphate reductase, found in Rhodococcus jostii (strain RHA1).